The following is a 333-amino-acid chain: Transcription factor MYB94 (333 aa).

2 consecutive HTH myb-type domains span residues 9 to 65 (KIGV…RPGI) and 66 to 116 (KRGN…KKKL). DNA-binding regions (H-T-H motif) lie at residues 37–61 (WRSVPTHTGLRRCSKSCRLRWTNYL) and 89–112 (WAAIASYLPERTDNDIKNYWNTHL). Residues 134–154 (KDFSISNKNTTSHQSSNSSKG) are compositionally biased toward polar residues. 2 disordered regions span residues 134–157 (KDFSISNKNTTSHQSSNSSKGQWE) and 183–218 (PTNFSIPDLGYGPSSSSSSTTTTTTTTRNTNPYPSG). Low complexity predominate over residues 196 to 209 (SSSSSSTTTTTTTT).

Expressed in germinating seeds, rosette and cauline leaves, flower buds, open flowers, stems and developing siliques.

The protein localises to the nucleus. In terms of biological role, transcription activator involved in the activation of cuticular wax biosynthesis under drought stress. Binds directly to the promoters of genes involved in cuticular wax biosynthesis. Transactivates WSD1, KCS2/DAISY, CER1, CER2, FAR3 and ECR genes. Functions together with MYB96 in the activation of cuticular wax biosynthesis. This chain is Transcription factor MYB94, found in Arabidopsis thaliana (Mouse-ear cress).